An 82-amino-acid polypeptide reads, in one-letter code: Acyl carrier protein (82 aa).

Residues Leu-3 to Lys-81 enclose the Carrier domain. The residue at position 41 (Ser-41) is an O-(pantetheine 4'-phosphoryl)serine.

Belongs to the acyl carrier protein (ACP) family. 4'-phosphopantetheine is transferred from CoA to a specific serine of apo-ACP by AcpS. This modification is essential for activity because fatty acids are bound in thioester linkage to the sulfhydryl of the prosthetic group.

Its subcellular location is the cytoplasm. It functions in the pathway lipid metabolism; fatty acid biosynthesis. In terms of biological role, carrier of the growing fatty acid chain in fatty acid biosynthesis. The protein is Acyl carrier protein of Tropheryma whipplei (strain Twist) (Whipple's bacillus).